A 799-amino-acid polypeptide reads, in one-letter code: MASLLQDRLTTDQDLLLMQEGMPMRKVRSKSWKKLRYFRLQNDGMTVWHARQARGSAKPSFSISDVETIRNGHDSELLRSLTEELPLEQGFTVVFHGRRSNLDLVANSVEEAQIWMRGLHLLVDLVTSMDHQERLDQWLSDWFQRGDKNQDGKMSFQEVQRLLHLMNVEMDQEYAFSLFQAADTSQSGTLEGEEFVEFYKALTKRAEVQELFESFSADGQKLTLLEFSDFLREEQKERDCTSELALELIDRYEPSDSGKLRHVLSMDGFLSYLCSKDGDIFNPACLPIYQDMTQPLNHYFICSSHNTYLVGDQLCGQSSVEGYIRALKRGCRCVEVDVWDGPSGEPVVYHGHTLTSRILFKDVVATVAQYAFQTSDYPVILSLETHCSWEQQQTMARHLTEILGEQLLSTTLDGVLPTQLPSPEELRRKILVKGKKLTLEEDLEYEEEEVEPGLEGEHESELALESQFETESEPEPQEQNLQIKDKKKVVTCPLFCPSICCQIVAQAPISKPGSLLLSQQKSKTILCPALSSLVIYLKSVSFRSFTHSKKHYHFYEISSFSETKAKRLIKEAGNEFVQHNTWQLSRVYPSGLRTDSSNYNPQELWNAGCQMVAMNMQTAGLEMDICDGHFRQNGGCGYVLKPDFLRDNQSSFHPERPISPFKAQTLLIQVISGQQLPKLNKTKEGSIVDPLVKVQIFGVRLDTARQETNYVENNGFNPYWGQTLCFRVLVPELAMLRFVVMDYDWKSRNDFIGQYTLPWSCMQQGYRHIHLLSKDGISLCPASIFVYICIREGLEGDES.

The region spanning 16 to 124 (LLMQEGMPMR…WMRGLHLLVD (109 aa)) is the PH domain. Residues 26-53 (KVRSKSWKKLRYFRLQNDGMTVWHARQA) are substrate binding. 3 consecutive EF-hand domains span residues 134 to 169 (RLDQWLSDWFQRGDKNQDGKMSFQEVQRLLHLMNVE), 170 to 205 (MDQEYAFSLFQAADTSQSGTLEGEEFVEFYKALTKR), and 206 to 237 (AEVQELFESFSADGQKLTLLEFSDFLREEQKE). Positions 147, 149, 151, 153, 158, 183, 185, 187, 189, and 194 each coordinate Ca(2+). The GBA signature appears at 213–243 (ESFSADGQKLTLLEFSDFLREEQKERDCTSE). In terms of domain architecture, PI-PLC X-box spans 290–435 (QDMTQPLNHY…LRRKILVKGK (146 aa)). The active site involves H305. Ca(2+) is bound by residues N306, E335, and D337. The active site involves H350. E384 provides a ligand contact to Ca(2+). Residues K433 and K435 each contribute to the substrate site. Residue S460 is modified to Phosphoserine. Residues 530 to 646 (LSSLVIYLKS…GYVLKPDFLR (117 aa)) enclose the PI-PLC Y-box domain. The substrate site is built by S559 and R586. Positions 646–773 (RDNQSSFHPE…QGYRHIHLLS (128 aa)) constitute a C2 domain. Ca(2+) is bound by residues I687, D689, N713, D742, Y743, and D744. The PDZ-binding signature appears at 768–771 (HIHL).

Interacts with GRIP1. Interacts (via GBA motif) with guanine nucleotide-binding protein G(i) alpha subunit GNAI3 (inactive GDP-bound form); low-affinity interaction. It depends on Ca(2+) as a cofactor.

It is found in the membrane. The protein localises to the nucleus. Its subcellular location is the cytoplasm. It localises to the endoplasmic reticulum. The enzyme catalyses a 1,2-diacyl-sn-glycero-3-phospho-(1D-myo-inositol-4,5-bisphosphate) + H2O = 1D-myo-inositol 1,4,5-trisphosphate + a 1,2-diacyl-sn-glycerol + H(+). The catalysed reaction is a 1,2-diacyl-sn-glycero-3-phospho-(1D-myo-inositol) + H2O = 1D-myo-inositol 1-phosphate + a 1,2-diacyl-sn-glycerol + H(+). Its function is as follows. Hydrolyzes the phosphatidylinositol 4,5-bisphosphate (PIP2) to generate 2 second messenger molecules diacylglycerol (DAG) and inositol 1,4,5-trisphosphate (IP3). DAG mediates the activation of protein kinase C (PKC), while IP3 releases Ca(2+) from intracellular stores. Required for acrosome reaction in sperm during fertilization, probably by acting as an important enzyme for intracellular Ca(2+) mobilization in the zona pellucida-induced acrosome reaction. May play a role in cell growth. Modulates the liver regeneration in cooperation with nuclear PKC. Overexpression up-regulates the Erk signaling pathway and proliferation. The protein is 1-phosphatidylinositol 4,5-bisphosphate phosphodiesterase delta-4 (PLCD4) of Macaca fascicularis (Crab-eating macaque).